The sequence spans 482 residues: ATP synthase subunit beta, chloroplastic (482 aa).

168-175 (GGAGVGKT) provides a ligand contact to ATP.

The protein belongs to the ATPase alpha/beta chains family. F-type ATPases have 2 components, CF(1) - the catalytic core - and CF(0) - the membrane proton channel. CF(1) has five subunits: alpha(3), beta(3), gamma(1), delta(1), epsilon(1). CF(0) has four main subunits: a(1), b(1), b'(1) and c(9-12).

The protein resides in the plastid. Its subcellular location is the chloroplast thylakoid membrane. It carries out the reaction ATP + H2O + 4 H(+)(in) = ADP + phosphate + 5 H(+)(out). Its function is as follows. Produces ATP from ADP in the presence of a proton gradient across the membrane. The catalytic sites are hosted primarily by the beta subunits. In Gnetum parvifolium (Small-leaved jointfir), this protein is ATP synthase subunit beta, chloroplastic.